A 333-amino-acid chain; its full sequence is G-protein coupled receptor 146 (333 aa).

The Extracellular segment spans residues 1–21; it reads MWSCEDLNYTNSGEEQYLCNE. Residue Asn-8 is glycosylated (N-linked (GlcNAc...) asparagine). A helical transmembrane segment spans residues 22 to 42; sequence FHLFLFIFSVLYLIICFPVGL. The Cytoplasmic segment spans residues 43–65; the sequence is CYNVQLVLVNLYNKATMTMPDVY. A helical membrane pass occupies residues 66-86; it reads FVNMAIAGLIINAVAPVYLFG. The Extracellular segment spans residues 87–102; it reads PAYTKWSLWSFGNEVY. A helical transmembrane segment spans residues 103 to 123; sequence ITLLILFNVSSLVIMYSTTLL. Residues 124–146 are Cytoplasmic-facing; the sequence is SLDYYIECALPRTYMSSVYNTKH. A helical transmembrane segment spans residues 147–167; sequence VCGFIWGGAVLTSFSSLLFYI. At 168–189 the chain is on the extracellular side; the sequence is CNHVSTKIIECSKMQNREAADA. Residues 190–210 traverse the membrane as a helical segment; that stretch reads IMVLIGYVVPIIAVIYALVLI. Over 211–234 the chain is Cytoplasmic; sequence LQIRKEATPLDQESGRLDPSVHRL. Residues 235–255 traverse the membrane as a helical segment; the sequence is LIATVCTQFILWTPYYVTLLV. Topologically, residues 256–275 are extracellular; it reads NTFMDARVKSSNTFYIRIFQ. A helical membrane pass occupies residues 276–296; that stretch reads FTEGLSNFLAFSSSFVLPLIH. Topologically, residues 297–333 are cytoplasmic; the sequence is RHINKNFSGKLQRLLKRLHCGSQGCTHEHTVVQQVMT.

The protein belongs to the G-protein coupled receptor 1 family.

Its subcellular location is the cell membrane. Functionally, G-protein coupled receptor required for the regulation of plasma cholesterol levels. This chain is G-protein coupled receptor 146 (gpr146), found in Xenopus laevis (African clawed frog).